Consider the following 913-residue polypeptide: Eukaryotic translation initiation factor 3 subunit C (913 aa).

Residues 1-31 (MSRFFANGSDSESESSEEEVQASNFNKANNF) are disordered. The span at 11 to 20 (SESESSEEEV) shows a compositional bias: acidic residues. A compositionally biased stretch (polar residues) spans 21–31 (QASNFNKANNF). Phosphoserine is present on residues Ser-34, Ser-165, Ser-177, and Ser-186. Disordered regions lie at residues 157–195 (FREA…AGTG) and 208–285 (PTKV…EDGE). Over residues 162 to 171 (DQESDVDEGE) the composition is skewed to acidic residues. The segment covering 172 to 184 (GEAHDSDAERAGA) has biased composition (basic and acidic residues). A compositionally biased stretch (acidic residues) spans 214–239 (DEDDSDDSIDWDSDTESETESSEDEN). Residues 244–263 (MRERFLKRTTEKEDKDDDKR) show a composition bias toward basic and acidic residues. Over residues 264 to 276 (KDKRKEQKHKVRK) the composition is skewed to basic residues. The region spanning 645–821 (FHMHINLELL…ETVVMHRSEP (177 aa)) is the PCI domain. Positions 856-913 (RGNMGNRDRGYNRNQNNQGGNWGGQRRDNRNQRNRNQRGHHKQQQQQQQQQVQTIEEE) are disordered. The span at 887-898 (QRNRNQRGHHKQ) shows a compositional bias: basic residues.

The protein belongs to the eIF-3 subunit C family. As to quaternary structure, component of the eukaryotic translation initiation factor 3 (eIF-3) complex. The eIF-3 complex interacts with pix.

The protein resides in the cytoplasm. Functionally, component of the eukaryotic translation initiation factor 3 (eIF-3) complex, which is involved in protein synthesis of a specialized repertoire of mRNAs and, together with other initiation factors, stimulates binding of mRNA and methionyl-tRNAi to the 40S ribosome. The eIF-3 complex specifically targets and initiates translation of a subset of mRNAs involved in cell proliferation. The protein is Eukaryotic translation initiation factor 3 subunit C of Drosophila virilis (Fruit fly).